Consider the following 108-residue polypeptide: MHSGILIRGRILGSRTANRDNNSPQHILGVGIQKADGFGGTTQDVEQVKIPDQLVQSGVVNQINSLIGKLCEVPINVRSWSMNGKNGTSYTLSFESGIQEIEELIYVR.

The protein belongs to the inovirus G5P protein family. In terms of assembly, homodimer.

Functionally, binds to DNA in a highly cooperative manner without pronounced sequence specificity. During synthesis of the single-stranded (progeny) viral DNA, prevents the conversion into the double-stranded replicative form. G5P is displaced by the capsid protein G8P during phage assembly on the inner bacterial membrane. This chain is DNA-Binding protein G5P (V), found in Enterobacteria phage I2-2 (Bacteriophage I2-2).